We begin with the raw amino-acid sequence, 293 residues long: Movement protein BC1 (293 aa).

This sequence belongs to the begomovirus movement protein BC1 family. In terms of assembly, binds to dimeric supercoiled plasmid DNA. Phosphorylated.

It is found in the host cell membrane. Its subcellular location is the host microsome membrane. The protein localises to the host endoplasmic reticulum membrane. In terms of biological role, transports viral genome to neighboring plant cells directly through plasmosdesmata, without any budding. The movement protein allows efficient cell to cell propagation, by bypassing the host cell wall barrier. Begomovirus genome is shuttled out of nucleus by Nuclear shuttle protein (NSP) and the movement protein transports the DNA-NSP complex to cell plasmodesmata and facilitates further movement across the cell wall. The polypeptide is Movement protein BC1 (Potato yellow mosaic virus (isolate Venezuela) (PYMV)).